Reading from the N-terminus, the 445-residue chain is KICSTOR subunit 2 (445 aa).

This sequence belongs to the KICS2 family. As to quaternary structure, part of the KICSTOR complex composed of KPTN, ITFG2, KICS2 and SZT2. SZT2 probably serves as a link between the other three proteins in the KICSTOR complex and may mediate the direct interaction with the GATOR complex via GATOR1. The KICSTOR complex interacts directly with the GATOR1 complex and most probably indirectly with the GATOR2 complex in an amino acid-independent manner.

The protein localises to the lysosome membrane. Functionally, as part of the KICSTOR complex functions in the amino acid-sensing branch of the TORC1 signaling pathway. Recruits, in an amino acid-independent manner, the GATOR1 complex to the lysosomal membranes and allows its interaction with GATOR2 and the RAG GTPases. Functions upstream of the RAG GTPases and is required to negatively regulate mTORC1 signaling in absence of amino acids. In absence of the KICSTOR complex mTORC1 is constitutively localized to the lysosome and activated. The KICSTOR complex is also probably involved in the regulation of mTORC1 by glucose. In Mus musculus (Mouse), this protein is KICSTOR subunit 2.